The sequence spans 104 residues: MSSIRKTYVLKLYVAGNTPNSVRALRTLNHILETEFQGVYALKVIDVLKNPQLAEEDKILATPTLAKVLPPPVRKIIGDLSDRERVLIGLDLLYEELSDGIMEY.

This sequence belongs to the KaiB family. In terms of assembly, the KaiABC complex composition changes during the circadian cycle to control KaiC phosphorylation. Complexes KaiC(6), KaiA(2-4):KaiC(6), KaiB(6):KaiC(6) and KaiC(6):KaiB(6):KaiA(12) are among the most important forms, many form cooperatively. Undergoes a major conformational rearrangment; in the free state forms homotetramers as a dimer of dimers. When bound to the CI domain of KaiC switches to a monomeric thioredoxin-fold (KaiB(fs)). KaiB(fs) binds CikA, leading it to dephosphorylate phospho-RpaA.

In terms of biological role, key component of the KaiABC oscillator complex, which constitutes the main circadian regulator in cyanobacteria. Complex composition changes during the circadian cycle to control KaiC phosphorylation. KaiA stimulates KaiC autophosphorylation, while KaiB sequesters KaiA, leading to KaiC autodephosphorylation. Phospho-Ser-431 KaiC accumulation triggers binding of KaiB to form the KaiB(6):KaiC(6) complex, leading to changes in output regulators CikA and SasA. KaiB switches to a thioredoxin-like fold (KaiB(fs)) when bound to KaiC. KaiB(6):KaiC(6) formation exposes a site for KaiA binding that sequesters KaiA from KaiC, making the KaiC(6):KaiB(6):KaiA(12) complex that results in KaiC autodephosphorylation. Its function is as follows. A metamorphic protein which reversibly switches between an inactive tetrameric fold and a rare, thioredoxin-like monomeric fold (KaiB(fs)). KaiB(fs) binds phospho-KaiC, KaiA and CikA. KaiA and CikA compete for binding to KaiB(fs), and KaiB(fs) and SasA compete for binding to KaiC, thus the clock oscillator and output signal pathway are tightly coupled. This Acaryochloris marina (strain MBIC 11017) protein is Circadian clock oscillator protein KaiB.